Consider the following 427-residue polypeptide: Trigger factor (427 aa).

In terms of domain architecture, PPIase FKBP-type spans 163–248 (GDIVVIDFAG…LKEIKRKELA (86 aa)).

The protein belongs to the FKBP-type PPIase family. Tig subfamily.

Its subcellular location is the cytoplasm. It carries out the reaction [protein]-peptidylproline (omega=180) = [protein]-peptidylproline (omega=0). Involved in protein export. Acts as a chaperone by maintaining the newly synthesized protein in an open conformation. Functions as a peptidyl-prolyl cis-trans isomerase. In Carboxydothermus hydrogenoformans (strain ATCC BAA-161 / DSM 6008 / Z-2901), this protein is Trigger factor.